The chain runs to 205 residues: Molybdenum cofactor guanylyltransferase (205 aa).

GTP is bound by residues 14 to 16, lysine 27, aspartate 77, and aspartate 107; that span reads LAG. Aspartate 107 serves as a coordination point for Mg(2+).

The protein belongs to the MobA family. As to quaternary structure, monomer. It depends on Mg(2+) as a cofactor.

Its subcellular location is the cytoplasm. The catalysed reaction is Mo-molybdopterin + GTP + H(+) = Mo-molybdopterin guanine dinucleotide + diphosphate. Transfers a GMP moiety from GTP to Mo-molybdopterin (Mo-MPT) cofactor (Moco or molybdenum cofactor) to form Mo-molybdopterin guanine dinucleotide (Mo-MGD) cofactor. This is Molybdenum cofactor guanylyltransferase from Burkholderia ambifaria (strain ATCC BAA-244 / DSM 16087 / CCUG 44356 / LMG 19182 / AMMD) (Burkholderia cepacia (strain AMMD)).